The sequence spans 272 residues: Catabolic 3-dehydroquinate dehydratase (272 aa).

3-dehydroquinate is bound by residues 66–68 and arginine 102; that span reads EFR. The Proton donor/acceptor role is filled by histidine 163. The active-site Schiff-base intermediate with substrate is the lysine 190. 3-dehydroquinate-binding residues include arginine 232, serine 251, and glutamine 255.

The protein belongs to the type-I 3-dehydroquinase family.

It catalyses the reaction 3-dehydroquinate = 3-dehydroshikimate + H2O. It functions in the pathway aromatic compound metabolism; 3,4-dihydroxybenzoate biosynthesis; 3,4-dihydroxybenzoate from 3-dehydroquinate: step 1/2. In terms of biological role, involved in the biosynthesis of protocatechuate. Catalyzes the catabolic dehydration of 3-dehydroquinate (DHQ) to yield 3-dehydroshikimate. The polypeptide is Catabolic 3-dehydroquinate dehydratase (Acinetobacter baylyi (strain ATCC 33305 / BD413 / ADP1)).